We begin with the raw amino-acid sequence, 677 residues long: METSSSRSVQVDDWQKNYSVVASSICTPKQKADAYRALLLHIQDAYANSEISQVFATNLFKRYTEKYSAIIDSDNVVTGLNNYAESIFALAGSQQADSDKWQSGLSINNVFKMSTVQEMMQAGQKFKESLLEPADASVVMCKEPTIFEVPQLGVCGGSEEADLLSSSVHGTEKTQAIPGNSLRCSPFQSTLFPMATNTKTCLTSSAPSGESTTATFHRTPLFGNTKKEPQSFPKTSTGLNMFLSNPSCVPSGCENPRERKAFNDSDTINMLSNPTLNKAPSKTEDSGQREDNSLPTFKTAKEQLWADQKKRSHQSQHTSKSFNGAIKKSLGAGRSRGIFGKFVPPVSNKQDGSEQNGNVKPKSSRAGSAEPAHLTDDRLKNVEPRMVELIMNEIMDHGPPVHWEDIAGVEFAKATIKEIVVWPMMRPDIFTGLRGPPKGILLFGPPGTGKTLIGKCIASQSGATFFSISASSLTSKWVGEGEKMVRALFAVARCQQPAVIFIDEIDSLLSQRGDGEHESSRRIKTEFLVQLDGATTSSEDRILVVGATNRPQEIDEAARRRLVKRLYIPLPEASARKQIVVNLMSKEQCCLTDEETELVVQQSDGFSGADMTQLCREASLGPIRSLHTADIATISPDQVRPIAYIDFENAFRTVRPSVSPKDLELYENWNKTFGCGK.

Residues 203-216 (TSSAPSGESTTATF) are compositionally biased toward polar residues. Disordered regions lie at residues 203 to 232 (TSSAPSGESTTATFHRTPLFGNTKKEPQSF), 249 to 324 (VPSG…SFNG), and 337 to 378 (GIFG…TDDR). A Glycyl lysine isopeptide (Lys-Gly) (interchain with G-Cter in SUMO2) cross-link involves residue K226. Polar residues predominate over residues 264 to 280 (DSDTINMLSNPTLNKAP). Residues 281 to 292 (SKTEDSGQREDN) show a composition bias toward basic and acidic residues. Residue K341 is modified to N6-acetyllysine. A compositionally biased stretch (polar residues) spans 347–358 (SNKQDGSEQNGN). ATP-binding positions include A407 and 447 to 452 (GTGKTL).

This sequence belongs to the AAA ATPase family. As to quaternary structure, hexamer. Interacts (via N-terminal one-half region) with RAD51; the interaction is direct. Interacts (via N-terminal one-half region) with SPIDR (via the C-terminal region); the interaction is direct. Interacts with FIRRM; may regulate homologous recombination. Mg(2+) is required as a cofactor.

The protein resides in the nucleus. Its subcellular location is the cytoplasm. It localises to the perinuclear region. The enzyme catalyses ATP + H2O = ADP + phosphate + H(+). Its function is as follows. Involved in DNA double-strand break (DBS) repair via homologous recombination (HR). Recruited at DSB sites independently of BRCA2, RAD51 and RAD51 paralogs in a H2AX-dependent manner. May regulate osteoblast proliferation and differentiation. May play a role in the control of male meiosis dynamic. The protein is Fidgetin-like protein 1 (Fignl1) of Rattus norvegicus (Rat).